A 640-amino-acid chain; its full sequence is Endoglucanase 2 (640 aa).

An N-terminal signal peptide occupies residues 1 to 34 (MARGGGAAGVSMAHHLGIALVVLVFAAMAQVARG). Asp93 (nucleophile) is an active-site residue. Residues His428, Asp480, and Glu489 contribute to the active site. Positions 512 to 640 (RARGRLGQSL…DVWVTGYKLV (129 aa)) are cleaved as a propeptide — removed in mature form. Asn528 is a glycosylation site (N-linked (GlcNAc...) asparagine).

The protein belongs to the glycosyl hydrolase 9 (cellulase E) family. In terms of tissue distribution, expressed in roots and flowers.

It localises to the secreted. It carries out the reaction Endohydrolysis of (1-&gt;4)-beta-D-glucosidic linkages in cellulose, lichenin and cereal beta-D-glucans.. Its function is as follows. Hydrolyzes 1,4-beta-glycosyl linkages of 1,4-beta-glucans and 1,3-1,4-beta-glucans. Possesses broad substrate specificity for hemicelluloses of type II cell walls. Substrate preference is carboxymethyl-cellulose &gt; 1,3-1,4-beta-glucan &gt; lichenan &gt; arabinoxylan &gt; phospho-swollen cellulose &gt; xylan &gt; glucomannan. May participate in lateral root development. The sequence is that of Endoglucanase 2 (GLU5) from Oryza sativa subsp. japonica (Rice).